A 230-amino-acid chain; its full sequence is Large ribosomal subunit protein uL1 (230 aa).

It belongs to the universal ribosomal protein uL1 family. Part of the 50S ribosomal subunit.

Binds directly to 23S rRNA. The L1 stalk is quite mobile in the ribosome, and is involved in E site tRNA release. In terms of biological role, protein L1 is also a translational repressor protein, it controls the translation of the L11 operon by binding to its mRNA. The polypeptide is Large ribosomal subunit protein uL1 (Rhodopseudomonas palustris (strain BisB18)).